A 117-amino-acid chain; its full sequence is Probable prefoldin subunit 1 (117 aa).

It belongs to the prefoldin subunit beta family. In terms of assembly, heterohexamer of two PFD-alpha type and four PFD-beta type subunits. Expressed in the distal cell tip of developing embryos.

It is found in the cytoplasm. Its function is as follows. Binds specifically to cytosolic chaperonin (c-CPN) and transfers target proteins to it. Binds to nascent polypeptide chain and promotes folding in an environment in which there are many competing pathways for nonnative proteins. Has a role in gonadogenesis. The sequence is that of Probable prefoldin subunit 1 (pfd-1) from Caenorhabditis elegans.